We begin with the raw amino-acid sequence, 206 residues long: Small ribosomal subunit protein uS4 (206 aa).

Over residues 1 to 16 the composition is skewed to basic and acidic residues; that stretch reads MTKRQESKYKIDRRMG. The tract at residues 1-46 is disordered; sequence MTKRQESKYKIDRRMGENIWGRPKSPVNRREYGPGQHGQRRKGKLS. One can recognise an S4 RNA-binding domain in the interval 94-154; it reads RRLDAVVYRA…EKSKQLAIVL (61 aa).

This sequence belongs to the universal ribosomal protein uS4 family. In terms of assembly, part of the 30S ribosomal subunit. Contacts protein S5. The interaction surface between S4 and S5 is involved in control of translational fidelity.

In terms of biological role, one of the primary rRNA binding proteins, it binds directly to 16S rRNA where it nucleates assembly of the body of the 30S subunit. Its function is as follows. With S5 and S12 plays an important role in translational accuracy. The polypeptide is Small ribosomal subunit protein uS4 (Parvibaculum lavamentivorans (strain DS-1 / DSM 13023 / NCIMB 13966)).